The sequence spans 429 residues: MGLYAAAAGVLAGVESRQGSIKGLVYSSNFQNVKQLYALVCETQRYSAVLDAVIASAGLLRAEKKLRPHLAKVLVYELLLGKGFRGGGGRWKALLGRHQARLKAELARLKVHRGVSRNEDLLEVGSRPGPASQLPRFVRVNTLKTCSDDVVDYFKRQGFSYQGRASSLDDLRALKGKHFLLDPLMPELLVFPAQTDLHEHPLYRAGHLILQDRASCLPAMLLDPPPGSHVIDACAAPGNKTSHLAALLKNQGKIFAFDLDAKRLASMATLLARAGVSCCELAEEDFLAVSPSDPRYHEVHYILLDPSCSGSGMPSRQLEEPGAGTPSPVRLHALAGFQQRALCHALTFPSLQRLVYSTCSLCQEENEDVVRDALQQNPGAFRLAPALPAWPHRGLSTFPGAEHCLRASPETTLSSGFFVAVIERVEVPR.

Residue Gly2 is modified to N-acetylglycine. Phosphoserine is present on Ser167. S-adenosyl-L-methionine contacts are provided by residues Cys234–Lys240, Asp258, Arg263, and Asp305. Catalysis depends on Cys359, which acts as the Nucleophile.

This sequence belongs to the class I-like SAM-binding methyltransferase superfamily. RsmB/NOP family. As to expression, ubiquitous. Detected in placenta, heart and skeletal muscle.

Its subcellular location is the nucleus. It is found in the nucleolus. It carries out the reaction cytidine(3782) in 28S rRNA + S-adenosyl-L-methionine = 5-methylcytidine(3782) in 28S rRNA + S-adenosyl-L-homocysteine + H(+). Its function is as follows. S-adenosyl-L-methionine-dependent methyltransferase that specifically methylates the C(5) position of cytosine 3782 (m5C3782) in 28S rRNA. m5C3782 promotes protein translation without affecting ribosome biogenesis and fidelity. Required for corpus callosum and cerebral cortex development. The protein is 28S rRNA (cytosine-C(5))-methyltransferase of Homo sapiens (Human).